The following is a 475-amino-acid chain: Ribulose bisphosphate carboxylase large chain (475 aa).

A propeptide spanning residues Met1–Val2 is cleaved from the precursor. Position 3 is an N-acetylproline (Pro3). An N6,N6,N6-trimethyllysine modification is found at Lys14. Asn123 and Thr173 together coordinate substrate. The active-site Proton acceptor is Lys175. Lys177 contributes to the substrate binding site. Residues Lys201, Asp203, and Glu204 each contribute to the Mg(2+) site. The residue at position 201 (Lys201) is an N6-carboxylysine. His294 acts as the Proton acceptor in catalysis. The substrate site is built by Arg295, His327, and Ser379.

Belongs to the RuBisCO large chain family. Type I subfamily. In terms of assembly, heterohexadecamer of 8 large chains and 8 small chains; disulfide-linked. The disulfide link is formed within the large subunit homodimers. Mg(2+) serves as cofactor. In terms of processing, the disulfide bond which can form in the large chain dimeric partners within the hexadecamer appears to be associated with oxidative stress and protein turnover.

Its subcellular location is the plastid. It localises to the chloroplast. The catalysed reaction is 2 (2R)-3-phosphoglycerate + 2 H(+) = D-ribulose 1,5-bisphosphate + CO2 + H2O. The enzyme catalyses D-ribulose 1,5-bisphosphate + O2 = 2-phosphoglycolate + (2R)-3-phosphoglycerate + 2 H(+). RuBisCO catalyzes two reactions: the carboxylation of D-ribulose 1,5-bisphosphate, the primary event in carbon dioxide fixation, as well as the oxidative fragmentation of the pentose substrate in the photorespiration process. Both reactions occur simultaneously and in competition at the same active site. The polypeptide is Ribulose bisphosphate carboxylase large chain (Tetradesmus obliquus (Green alga)).